Reading from the N-terminus, the 485-residue chain is Phosphoglucosamine mutase (485 aa).

Residue S133 is the Phosphoserine intermediate of the active site. Residues S133, D274, D276, and D278 each contribute to the Mg(2+) site. S133 is modified (phosphoserine).

The protein belongs to the phosphohexose mutase family. Mg(2+) is required as a cofactor. Post-translationally, activated by phosphorylation.

The catalysed reaction is alpha-D-glucosamine 1-phosphate = D-glucosamine 6-phosphate. In terms of biological role, catalyzes the conversion of glucosamine-6-phosphate to glucosamine-1-phosphate. The polypeptide is Phosphoglucosamine mutase (Crocosphaera subtropica (strain ATCC 51142 / BH68) (Cyanothece sp. (strain ATCC 51142))).